A 439-amino-acid chain; its full sequence is Agmatine coumaroyltransferase-1 (439 aa).

Residues His-152 and Asp-385 each act as proton acceptor in the active site.

This sequence belongs to the plant acyltransferase family. As to quaternary structure, monomer.

It catalyses the reaction 4-coumaroyl-CoA + agmatine = N-(4-guanidinobutyl)-4-hydroxycinnamamide + CoA + H(+). With respect to regulation, inhibited by DEPC. Completely inhibited by ZnSO(4), strongly inhibited by CuSO(4), partially inhibited by MnCl(2). Unaffected by MgCl(2) or CaCl(2). Its function is as follows. Involved in the synthesis of hordatines (antifungal hydroxycinnamoylagmatine derivatives). Specific for agmatine as the acyl acceptor, inactive towards tyramine and putrescine. Has activity with the acyl donors 4-coumaroyl-CoA, cinnamoyl-CoA, caffeoyl-CoA, feruloyl-CoA, and to a lesser extent sinapoyl-CoA. The chain is Agmatine coumaroyltransferase-1 (ACT-1) from Hordeum vulgare (Barley).